We begin with the raw amino-acid sequence, 96 residues long: Aspartyl/glutamyl-tRNA(Asn/Gln) amidotransferase subunit C (96 aa).

It belongs to the GatC family. In terms of assembly, heterotrimer of A, B and C subunits.

The catalysed reaction is L-glutamyl-tRNA(Gln) + L-glutamine + ATP + H2O = L-glutaminyl-tRNA(Gln) + L-glutamate + ADP + phosphate + H(+). It catalyses the reaction L-aspartyl-tRNA(Asn) + L-glutamine + ATP + H2O = L-asparaginyl-tRNA(Asn) + L-glutamate + ADP + phosphate + 2 H(+). Its function is as follows. Allows the formation of correctly charged Asn-tRNA(Asn) or Gln-tRNA(Gln) through the transamidation of misacylated Asp-tRNA(Asn) or Glu-tRNA(Gln) in organisms which lack either or both of asparaginyl-tRNA or glutaminyl-tRNA synthetases. The reaction takes place in the presence of glutamine and ATP through an activated phospho-Asp-tRNA(Asn) or phospho-Glu-tRNA(Gln). In Exiguobacterium sp. (strain ATCC BAA-1283 / AT1b), this protein is Aspartyl/glutamyl-tRNA(Asn/Gln) amidotransferase subunit C.